We begin with the raw amino-acid sequence, 438 residues long: Flotillin-2 (438 aa).

This sequence belongs to the band 7/mec-2 family. Flotillin subfamily. As to quaternary structure, heterooligomeric complex of flotillins 1 and 2.

Its subcellular location is the membrane. Functionally, may play a role in axon growth and regeneration. May be involved in epidermal cell adhesion and epidermal structure and function. The polypeptide is Flotillin-2 (Drosophila melanogaster (Fruit fly)).